Here is a 261-residue protein sequence, read N- to C-terminus: Ribonuclease HII (261 aa).

The 189-residue stretch at lysine 71–serine 259 folds into the RNase H type-2 domain. 3 residues coordinate a divalent metal cation: aspartate 77, glutamate 78, and aspartate 169.

The protein belongs to the RNase HII family. Mn(2+) serves as cofactor. It depends on Mg(2+) as a cofactor.

The protein localises to the cytoplasm. It carries out the reaction Endonucleolytic cleavage to 5'-phosphomonoester.. Functionally, endonuclease that specifically degrades the RNA of RNA-DNA hybrids. The protein is Ribonuclease HII of Listeria monocytogenes serovar 1/2a (strain ATCC BAA-679 / EGD-e).